The primary structure comprises 202 residues: Glycerol-3-phosphate acyltransferase 1 (202 aa).

The next 5 helical transmembrane spans lie at 8–28 (AGMI…MSTG), 85–105 (LSLT…IWPL), 122–142 (ILVV…FVLA), 146–166 (QFTL…LIMA), and 173–190 (AGLA…RKNI).

Belongs to the PlsY family. Probably interacts with PlsX.

The protein localises to the cell membrane. It carries out the reaction an acyl phosphate + sn-glycerol 3-phosphate = a 1-acyl-sn-glycero-3-phosphate + phosphate. Its pathway is lipid metabolism; phospholipid metabolism. Functionally, catalyzes the transfer of an acyl group from acyl-phosphate (acyl-PO(4)) to glycerol-3-phosphate (G3P) to form lysophosphatidic acid (LPA). This enzyme utilizes acyl-phosphate as fatty acyl donor, but not acyl-CoA or acyl-ACP. In Desulfitobacterium hafniense (strain Y51), this protein is Glycerol-3-phosphate acyltransferase 1.